The sequence spans 304 residues: Tyrosine recombinase XerD (304 aa).

Positions 1–92 (MKARVLAKTW…VARGLHKFAL (92 aa)) constitute a Core-binding (CB) domain. In terms of domain architecture, Tyr recombinase spans 113 to 298 (HLPDTLSINE…TADSLREVWR (186 aa)). Catalysis depends on residues arginine 156, lysine 180, histidine 250, arginine 253, and histidine 276. The O-(3'-phospho-DNA)-tyrosine intermediate role is filled by tyrosine 285.

This sequence belongs to the 'phage' integrase family. XerD subfamily. Forms a cyclic heterotetrameric complex composed of two molecules of XerC and two molecules of XerD.

The protein localises to the cytoplasm. Its function is as follows. Site-specific tyrosine recombinase, which acts by catalyzing the cutting and rejoining of the recombining DNA molecules. The XerC-XerD complex is essential to convert dimers of the bacterial chromosome into monomers to permit their segregation at cell division. It also contributes to the segregational stability of plasmids. The sequence is that of Tyrosine recombinase XerD from Corynebacterium glutamicum (strain ATCC 13032 / DSM 20300 / JCM 1318 / BCRC 11384 / CCUG 27702 / LMG 3730 / NBRC 12168 / NCIMB 10025 / NRRL B-2784 / 534).